A 298-amino-acid chain; its full sequence is Ribosomal protein uL3 glutamine methyltransferase (298 aa).

It belongs to the protein N5-glutamine methyltransferase family. PrmB subfamily.

It carries out the reaction L-glutaminyl-[ribosomal protein uL3] + S-adenosyl-L-methionine = N(5)-methyl-L-glutaminyl-[ribosomal protein uL3] + S-adenosyl-L-homocysteine + H(+). In terms of biological role, methylates large ribosomal subunit protein uL3 on a specific glutamine residue. The polypeptide is Ribosomal protein uL3 glutamine methyltransferase (Bordetella pertussis (strain Tohama I / ATCC BAA-589 / NCTC 13251)).